The chain runs to 201 residues: Acyl-homoserine-lactone synthase (201 aa).

Belongs to the autoinducer synthase family.

The enzyme catalyses a fatty acyl-[ACP] + S-adenosyl-L-methionine = an N-acyl-L-homoserine lactone + S-methyl-5'-thioadenosine + holo-[ACP] + H(+). Its function is as follows. Required for the synthesis of PAI consisting of 3-oxo-N-(tetrahydro-2-oxo-3-furanyl)-dodecanamide also known as N-(3-oxododecanoyl)homoserine lactone, an autoinducer molecule which binds to LasR and thus acts in elastase biosynthesis regulation. The sequence is that of Acyl-homoserine-lactone synthase (lasI) from Pseudomonas aeruginosa (strain ATCC 15692 / DSM 22644 / CIP 104116 / JCM 14847 / LMG 12228 / 1C / PRS 101 / PAO1).